The following is a 230-amino-acid chain: Heptaprenylglyceryl phosphate synthase (230 aa).

Sn-glycerol 1-phosphate is bound at residue lysine 12. Mg(2+)-binding residues include aspartate 14 and threonine 40. Sn-glycerol 1-phosphate-binding positions include 159–164, glycine 189, and 209–210; these read YIEYSG and GD.

The protein belongs to the GGGP/HepGP synthase family. Group I subfamily. In terms of assembly, homodimer. Mg(2+) serves as cofactor.

The catalysed reaction is sn-glycerol 1-phosphate + all-trans-heptaprenyl diphosphate = 3-heptaprenyl-sn-glycero-1-phosphate + diphosphate. The protein operates within membrane lipid metabolism; glycerophospholipid metabolism. Functionally, prenyltransferase that catalyzes in vivo the transfer of the heptaprenyl moiety of heptaprenyl pyrophosphate (HepPP; 35 carbon atoms) to the C3 hydroxyl of sn-glycerol-1-phosphate (G1P), producing heptaprenylglyceryl phosphate (HepGP). This reaction is an ether-bond-formation step in the biosynthesis of archaea-type G1P-based membrane lipids found in Bacillales. This chain is Heptaprenylglyceryl phosphate synthase, found in Staphylococcus aureus (strain Mu3 / ATCC 700698).